The following is a 936-amino-acid chain: Protein NLP2 (936 aa).

The interval 99 to 130 (IMSVNPTEAEKTGKSSGELGSDDGAHQGSSMV) is disordered. The RWP-RK domain occupies 550-635 (QPSSIGHAEK…INSVHGVDRS (86 aa)). Disordered stretches follow at residues 666-697 (PSVGKTVEENSDLKSEEGCSLPDGSQRQSCQL), 753-782 (CTNPSSSLRPSSESTRNQIVGRNSPSIQQE), and 794-827 (DKDHMHPSTSGMTDSSSGSASSHPTFKQNTRSAL). Over residues 671–682 (TVEENSDLKSEE) the composition is skewed to basic and acidic residues. The span at 688–697 (DGSQRQSCQL) shows a compositional bias: polar residues. A compositionally biased stretch (low complexity) spans 754–769 (TNPSSSLRPSSESTRN). Polar residues predominate over residues 770-781 (QIVGRNSPSIQQ). Residues 801–815 (STSGMTDSSSGSASS) are compositionally biased toward low complexity. Polar residues predominate over residues 816–825 (HPTFKQNTRS). The PB1 domain maps to 834 to 916 (ALTVKATYNG…RIVKLQVRDL (83 aa)).

The protein resides in the nucleus. Its function is as follows. Probable transcription factor. In Oryza sativa subsp. japonica (Rice), this protein is Protein NLP2.